We begin with the raw amino-acid sequence, 20 residues long: Protein PR-L6 (20 aa).

It belongs to the BetVI family.

The polypeptide is Protein PR-L6 (Lupinus luteus (European yellow lupine)).